We begin with the raw amino-acid sequence, 160 residues long: Transcription antitermination protein NusB (160 aa).

Belongs to the NusB family.

In terms of biological role, involved in transcription antitermination. Required for transcription of ribosomal RNA (rRNA) genes. Binds specifically to the boxA antiterminator sequence of the ribosomal RNA (rrn) operons. The protein is Transcription antitermination protein NusB of Allorhizobium ampelinum (strain ATCC BAA-846 / DSM 112012 / S4) (Agrobacterium vitis (strain S4)).